Here is a 66-residue protein sequence, read N- to C-terminus: Sodium/potassium-transporting ATPase subunit gamma (66 aa).

Residues 29–46 (GGLIFAGLAFVVGLLILL) form a helical membrane-spanning segment.

The protein belongs to the FXYD family. In terms of assembly, regulatory subunit of the sodium/potassium-transporting ATPase which is composed of a catalytic alpha subunit, an auxiliary non-catalytic beta subunit and an additional regulatory subunit. Highest levels expressed in the kidney and spleen. Restricted to the basolateral membrane in renal epithelial cells and varies in its level of expression along the nephron.

The protein localises to the membrane. Its function is as follows. May be involved in forming the receptor site for cardiac glycoside binding or may modulate the transport function of the sodium ATPase. In Rattus norvegicus (Rat), this protein is Sodium/potassium-transporting ATPase subunit gamma (Fxyd2).